A 152-amino-acid polypeptide reads, in one-letter code: Small ribosomal subunit protein uS13z/uS13y/uS13x (152 aa).

Ser2 bears the N-acetylserine mark.

It belongs to the universal ribosomal protein uS13 family.

It is found in the cytoplasm. Its function is as follows. Located at the top of the head of the 40S subunit, it contacts several helices of the 18S rRNA. In Arabidopsis thaliana (Mouse-ear cress), this protein is Small ribosomal subunit protein uS13z/uS13y/uS13x (RPS18A).